The sequence spans 367 residues: tRNA uridine(34) hydroxylase (367 aa).

In terms of domain architecture, Rhodanese spans 159–253 (EDENSIVVDV…YAHEVSQKGL (95 aa)). Cys-213 serves as the catalytic Cysteine persulfide intermediate.

It belongs to the TrhO family.

It catalyses the reaction uridine(34) in tRNA + AH2 + O2 = 5-hydroxyuridine(34) in tRNA + A + H2O. In terms of biological role, catalyzes oxygen-dependent 5-hydroxyuridine (ho5U) modification at position 34 in tRNAs. This is tRNA uridine(34) hydroxylase from Leptospira interrogans serogroup Icterohaemorrhagiae serovar Lai (strain 56601).